The following is a 558-amino-acid chain: Putative cation/proton antiporter YbaL (558 aa).

Topologically, residues 1–3 (MHH) are periplasmic. A helical membrane pass occupies residues 4 to 24 (ATPLITTIVGGLVLAFILGML). Residues 25–31 (ANKLRIS) are Cytoplasmic-facing. Residues 32–52 (PLVGYLLAGVLAGPFTPGFVA) traverse the membrane as a helical segment. Residues 53 to 55 (DTK) are Periplasmic-facing. Residues 56 to 76 (LAPELAELGVILLMFGVGLHF) form a helical membrane-spanning segment. Residues 77–85 (SLKDLMAVK) lie on the Cytoplasmic side of the membrane. Residues 86–106 (AIAIPGAIAQIAVATLLGMAL) traverse the membrane as a helical segment. Residues 107–112 (SAVLGW) are Periplasmic-facing. The chain crosses the membrane as a helical span at residues 113–133 (SLMTGIVFGLCLSTASTVVLL). Over 134 to 148 (RALEERQLIDSQRGQ) the chain is Cytoplasmic. Residues 149-169 (IAIGWLIVEDLVMVLTLVLLP) form a helical membrane-spanning segment. Residues 170–185 (AVAGMMEQGDVGFATL) lie on the Periplasmic side of the membrane. The chain crosses the membrane as a helical span at residues 186–206 (AVDMGITIGKVIAFIAIMMLV). Over 207 to 225 (GRRLVPWIMARSAATGSRE) the chain is Cytoplasmic. A helical membrane pass occupies residues 226–246 (LFTLSVLALALGVAFGAVELF). A topological domain (periplasmic) is located at residue aspartate 247. A helical transmembrane segment spans residues 248–268 (VSFALGAFFAGMVLNESELSH). Residues 269–279 (RAAHDTLPLRD) are Cytoplasmic-facing. The helical transmembrane segment at 280-300 (AFAVLFFVSVGMLFDPLILIQ) threads the bilayer. Residues 301–303 (QPL) are Periplasmic-facing. Residues 304–324 (AVLATLAIILFGKSLAAFFLV) form a helical membrane-spanning segment. Residues 325-336 (RLFGHSQRTALT) are Cytoplasmic-facing. A helical transmembrane segment spans residues 337–357 (IAASLAQIGEFAFILAGLGMA). Over 358 to 367 (LNLLPQAGQN) the chain is Periplasmic. A helical transmembrane segment spans residues 368-388 (LVLAGAILSIMLNPVLFALLE). The Cytoplasmic portion of the chain corresponds to 389-558 (KYLAKTETLE…TPPAGEVVTG (170 aa)). The region spanning 417–534 (CNHALLVGYG…TERGANQVVM (118 aa)) is the RCK N-terminal domain. AMP-binding positions include 427 to 428 (RV), 447 to 448 (ET), 467 to 468 (NA), glutamate 494, and arginine 514.

It belongs to the monovalent cation:proton antiporter 2 (CPA2) transporter (TC 2.A.37) family.

The protein resides in the cell inner membrane. This Escherichia coli (strain K12) protein is Putative cation/proton antiporter YbaL (ybaL).